We begin with the raw amino-acid sequence, 171 residues long: Methyl-coenzyme M reductase operon protein D (171 aa).

MCR is composed of three subunits: alpha, beta, and gamma. The function of proteins C and D is not known.

The protein is Methyl-coenzyme M reductase operon protein D (mcrD) of Methanosarcina barkeri (strain Fusaro / DSM 804).